We begin with the raw amino-acid sequence, 345 residues long: Trans-enoyl reductase tndF (345 aa).

Positions 1-26 are disordered; it reads MAREHQAAILPQPGGPLSVGMRPTPK. NADP(+)-binding positions include 44–49, 168–171, 191–194, Y209, and 244–245; these read CDYYQR, SSSV, SPEH, and LD.

Belongs to the zinc-containing alcohol dehydrogenase family.

It participates in secondary metabolite biosynthesis; terpenoid biosynthesis. In terms of biological role, trans-enoyl reductase; part of the gene cluster that mediates the biosynthesis of talaronoid C, a fusicoccane diterpenoid with an unprecedented tricyclic 5/8/6 ring system. The first step in the pathway is performed by the fusicoccadiene synthase tndC that possesses both prenyl transferase and terpene cyclase activity, converting isopentenyl diphosphate and dimethylallyl diphosphate into geranylgeranyl diphosphate (GGDP) and further converting GGDP into talarodiene, a precursor for talaronoid C. The remaining enzymes from the cluster include the cytochrome P450 monooxygenase tndB, the aldehyde reductase tndE and the alcohol dehydrogenase tndF that are involved in the conversion of talarodiene into talaronoid C. The polypeptide is Trans-enoyl reductase tndF (Aspergillus flavipes).